The chain runs to 207 residues: Protein THEM6 (207 aa).

The first 21 residues, 1–21 (MLELLVASLSLALAFFALLDG), serve as a signal peptide directing secretion. Residue N188 is glycosylated (N-linked (GlcNAc...) asparagine). S199 is subject to Phosphoserine.

It belongs to the THEM6 family.

Its subcellular location is the secreted. This chain is Protein THEM6 (Them6), found in Mus musculus (Mouse).